Consider the following 466-residue polypeptide: Carboxy-terminal processing protease CtpA (466 aa).

The first 36 residues, 1 to 36, serve as a signal peptide directing secretion; the sequence is MKRQLKLFFIVLITAVVASALTLFITGNSSILGQKS. The region spanning 96–174 is the PDZ domain; the sequence is DETISASFEG…TKVKLELNRA (79 aa). Residues S297, E308, and K322 each act as charge relay system in the active site.

It belongs to the peptidase S41A family.

The enzyme catalyses The enzyme shows specific recognition of a C-terminal tripeptide, Xaa-Yaa-Zaa, in which Xaa is preferably Ala or Leu, Yaa is preferably Ala or Tyr, and Zaa is preferably Ala, but then cleaves at a variable distance from the C-terminus. A typical cleavage is -Ala-Ala-|-Arg-Ala-Ala-Lys-Glu-Asn-Tyr-Ala-Leu-Ala-Ala.. This is Carboxy-terminal processing protease CtpA (ctpA) from Bacillus subtilis (strain 168).